The primary structure comprises 609 residues: Tyrosyl-DNA phosphodiesterase 1 (609 aa).

Residues 1 to 12 (MSQESSYGKWTI) are compositionally biased toward polar residues. The interval 1 to 155 (MSQESSYGKW…YETSGEGQDI (155 aa)) is disordered. Serine 61 is modified (phosphoserine). Over residues 105 to 118 (QPKRVLPQEKKHVS) the composition is skewed to basic and acidic residues. A phosphoserine mark is found at serine 119 and serine 132. A Phosphothreonine modification is found at threonine 148. Residue serine 149 is modified to Phosphoserine. Histidine 264 (nucleophile) is an active-site residue. Residue lysine 266 coordinates substrate. The segment at 401–404 (SIGS) is interaction with DNA. The active-site Proton donor/acceptor is the histidine 494. Lysine 496 contributes to the substrate binding site.

The protein belongs to the tyrosyl-DNA phosphodiesterase family. As to quaternary structure, monomer. Ubiquitous.

Its subcellular location is the nucleus. The protein resides in the cytoplasm. Its function is as follows. DNA repair enzyme that can remove a variety of covalent adducts from DNA through hydrolysis of a 3'-phosphodiester bond, giving rise to DNA with a free 3' phosphate. Catalyzes the hydrolysis of dead-end complexes between DNA and the topoisomerase I active site tyrosine residue. Hydrolyzes 3'-phosphoglycolates on protruding 3' ends on DNA double-strand breaks due to DNA damage by radiation and free radicals. Acts on blunt-ended double-strand DNA breaks and on single-stranded DNA. Has low 3'exonuclease activity and can remove a single nucleoside from the 3'end of DNA and RNA molecules with 3'hydroxyl groups. Has no exonuclease activity towards DNA or RNA with a 3'phosphate. This Mus musculus (Mouse) protein is Tyrosyl-DNA phosphodiesterase 1 (Tdp1).